The following is a 262-amino-acid chain: uncharacterized protein (262 aa).

6 helical membrane-spanning segments follow: residues 21–41 (ILITYFLCWAGFLFSFSVGKF), 94–114 (IVSNFMGCLIIMFALGALAYL), 139–159 (LLILFIFTVINPLTGLIGVNL), 164–184 (LIAVLPHGFFEFFGFATAVVV), 205–225 (IVILIACSFIFIFIAGMLEPI), and 240–260 (LLAAFATGYKNLFLYLISMLF).

The protein resides in the cell membrane. This is an uncharacterized protein from Methanocaldococcus jannaschii (strain ATCC 43067 / DSM 2661 / JAL-1 / JCM 10045 / NBRC 100440) (Methanococcus jannaschii).